Consider the following 490-residue polypeptide: Pre-glycoprotein polyprotein GP complex (490 aa).

The N-myristoyl glycine; by host moiety is linked to residue Gly2. The Extracellular portion of the chain corresponds to 2–17 (GQIVTFFQEVPHVIEE). Residues 18 to 33 (VMNIVLIALSILAILK) traverse the membrane as a helical segment. At 34–58 (GLYNVATCGLIGLVTFLLLSGRSCS) the chain is on the cytoplasmic side. Zn(2+) is bound at residue Cys57. Topologically, residues 59–431 (LIYKGTYELQ…QGKTPLGLVD (373 aa)) are extracellular. Residues Asn78, Asn88, Asn98, Asn108, Asn118, and Asn166 are each glycosylated (N-linked (GlcNAc...) asparagine; by host). 6 disulfides stabilise this stretch: Cys85–Cys230, Cys117–Cys154, Cys179–Cys211, Cys278–Cys291, Cys300–Cys309, and Cys363–Cys384. The N-linked (GlcNAc...) asparagine; by host glycan is linked to Asn223. N-linked (GlcNAc...) asparagine; by host glycosylation is found at Asn364, Asn372, Asn389, and Asn394. A helical membrane pass occupies residues 432–452 (LFVFSTSFYLISIFLHLVKIP). The Cytoplasmic portion of the chain corresponds to 453–490 (THRHIVGKPCPKPHRLNHMGICSCGLYKQPGVPVRWKR). Zn(2+) contacts are provided by His454, His456, Cys462, His466, Cys474, and Cys476.

Belongs to the arenaviridae GPC protein family. As to quaternary structure, interacts with glycoprotein G2. Part of the GP complex (GP-C) together with glycoprotein G1 and glycoprotein G2. The GP-complex interacts with protein Z, which interacts with ribonucleocapsid; these interactions may induce virion budding. In terms of assembly, homotrimer; disulfide-linked. In pre-fusion state, G1 homotrimers bind G2 homotrimers via ionic interactions. Part of the GP complex (GP-C) together with glycoprotein G2 and the stable signal peptide. Interacts with the primary host receptor DAG1 on the cell surface; this interaction occurs at pH 8.0 but not at pH 6.0 and below. Upon virus internalization and at endosomal pH, interacts with the host lysosomal protein LAMP1; this interaction mediates G1 dissociation from GP-C and membrane fusion. The GP-complex interacts with protein Z, which interacts with ribonucleocapsid; these interactions may induce virion budding. Homotrimer. Interacts with the stable signal peptide. In pre-fusion state, G2 homotrimers bind G1 homotrimers via ionic interactions. Part of the GP complex (GP-C) together with glycoprotein G1 and the stable signal peptide. Acidification in the endosome triggers rearrangements, which ultimately leads to a 6 helix bundle formed by the two heptad repeat domains (HR1 and HR2) in post-fusion state. The GP-complex interacts with protein Z, which interacts with ribonucleocapsid; these interactions may induce virion budding. Post-translationally, specific enzymatic cleavages in vivo yield mature proteins. GP-C polyprotein is cleaved in the endoplasmic reticulum by the host protease MBTPS1. Only cleaved glycoprotein is incorporated into virions. In terms of processing, the SSP remains stably associated with the GP complex following cleavage by signal peptidase and plays crucial roles in the trafficking of GP through the secretory pathway. Myristoylation is necessary for GP2-mediated fusion activity.

The protein resides in the virion membrane. Its subcellular location is the host endoplasmic reticulum membrane. It localises to the host Golgi apparatus membrane. The protein localises to the host cell membrane. In terms of biological role, functions as a cleaved signal peptide that is retained as the third component of the GP complex (GP-C). Helps to stabilize the spike complex in its native conformation. The SSP is required for efficient glycoprotein expression, post-translational maturation cleavage of G1 and G2, glycoprotein transport to the cell surface plasma membrane, formation of infectious virus particles, and acid pH-dependent glycoprotein-mediated cell fusion. Forms the virion spikes together with glycoprotein G2. The glycoprotein spike trimers are connected to the underlying matrix. Interacts with the host receptor. Mediates virus attachment to the host primary receptor alpha-dystroglycan DAG1 (alpha-DG) at the cell surface. This attachment induces virion internalization apparently through macropinocytosis. Following endocytosis, there is a pH-dependent switch from binding DAG1 to the host lysosomal receptor LAMP1. This latter binding triggers the dissociation of GP1, exposing the fusion subunit, GP2, such that fusion can occur. Down-modulates host DAG1. Functionally, forms the virion spikes together with glycoprotein G1. The glycoprotein spike trimers are connected to the underlying matrix. Class I viral fusion protein that directs fusion of viral and host endosomal membranes, leading to delivery of the nucleocapsid into the cytoplasm. Membrane fusion is mediated by irreversible conformational changes induced by acidification. The sequence is that of Pre-glycoprotein polyprotein GP complex from Lassa virus (strain GA391) (LASV).